Consider the following 139-residue polypeptide: Endocuticle structural glycoprotein SgAbd-8 (139 aa).

Residue glutamine 1 is modified to Pyrrolidone carboxylic acid. Residue threonine 14 is glycosylated (O-linked (HexNAc...) threonine). Serine 15 is a glycosylation site (O-linked (HexNAc...) serine). The 71-residue stretch at 29–99 (DGSYAWSYET…PEGAHLPTPP (71 aa)) folds into the Chitin-binding type R&amp;R domain. An O-linked (HexNAc...) threonine glycan is attached at threonine 97. Residues 111 to 139 (FIASQPQQPGNNGGGQFPRPQPFPRPGAF) form a disordered region. Over residues 129–139 (RPQPFPRPGAF) the composition is skewed to pro residues.

Functionally, component of the abdominal endocuticle. This is Endocuticle structural glycoprotein SgAbd-8 from Schistocerca gregaria (Desert locust).